A 497-amino-acid polypeptide reads, in one-letter code: tRNA (adenine(58)-N(1))-methyltransferase non-catalytic subunit TRM6 (497 aa).

The interval 81–103 (LEEPASETKEAGTDNRNIVDDGK) is disordered. The interval 95-105 (NRNIVDDGKSQ) is substrate. Phosphothreonine is present on Thr108. Substrate stretches follow at residues 146 to 155 (KYIKKKKKKY) and 176 to 183 (REPGKINH). The tract at residues 275 to 354 (MLSSEPKDST…EKQRRQEEQR (80 aa)) is disordered. Acidic residues predominate over residues 289–307 (SNGELEEKEIAEQADEDNI). Residues 328–354 (PENKEPKEKRSKRDYIQEKQRRQEEQR) are compositionally biased toward basic and acidic residues. Residues Arg349 and Arg377 each contribute to the substrate site. Substrate regions lie at residues 415 to 423 (RERGGVINL) and 434 to 441 (QVLPDRSH). The interval 474-497 (TGALDPHKAEEPAAKKQKCMESAS) is disordered. Positions 478 to 487 (DPHKAEEPAA) are enriched in basic and acidic residues.

This sequence belongs to the TRM6/GCD10 family. As to quaternary structure, heterotetramer; composed of two copies of TRMT6 and two copies of TRMT61A.

The protein localises to the nucleus. Substrate-binding subunit of tRNA (adenine-N(1)-)-methyltransferase, which catalyzes the formation of N(1)-methyladenine at position 58 (m1A58) in initiator methionyl-tRNA. Together with the TRMT61A catalytic subunit, part of a mRNA N(1)-methyltransferase complex that mediates methylation of adenosine residues at the N(1) position of a small subset of mRNAs: N(1) methylation takes place in tRNA T-loop-like structures of mRNAs and is only present at low stoichiometries. This chain is tRNA (adenine(58)-N(1))-methyltransferase non-catalytic subunit TRM6 (Trmt6), found in Mus musculus (Mouse).